Here is a 36-residue protein sequence, read N- to C-terminus: Photosystem I reaction center subunit VIII (36 aa).

The helical transmembrane segment at 9-29 (ISVPLVGLVFPAITMVLSFIY) threads the bilayer.

It belongs to the PsaI family.

The protein localises to the plastid. It is found in the chloroplast thylakoid membrane. In terms of biological role, may help in the organization of the PsaL subunit. The protein is Photosystem I reaction center subunit VIII of Huperzia lucidula (Shining clubmoss).